The sequence spans 180 residues: Pro-glucagon (180 aa).

The signal sequence occupies residues 1–20 (MKTIYFVAGLFVMLVQGSWQ). Positions 25 to 59 (NTEEKSRSFPAPQTDPLDDPDQMTEDKRHSQGTFT) are disordered. A Phosphoserine modification is found at Ser-54. A propeptide spanning residues 84-89 (NKNNIA) is cleaved from the precursor. Phosphoserine occurs at positions 105 and 108. Arginine amide is present on Arg-127. A propeptide spanning residues 131-145 (DFPEEVTIVEELRRR) is cleaved from the precursor. Ser-150 and Ser-152 each carry phosphoserine.

Belongs to the glucagon family. In terms of processing, proglucagon is post-translationally processed in a tissue-specific manner in pancreatic A cells and intestinal L cells. In pancreatic A cells, the major bioactive hormone is glucagon cleaved by PCSK2/PC2. In the intestinal L cells PCSK1/PC1 liberates GLP-1, GLP-2, glicentin and oxyntomodulin. GLP-1 is further N-terminally truncated by post-translational processing in the intestinal L cells resulting in GLP-1(7-37) GLP-1-(7-36)amide. The C-terminal amidation is neither important for the metabolism of GLP-1 nor for its effects on the endocrine pancreas. As to expression, glucagon is secreted in the A cells of the islets of Langerhans. GLP-1, GLP-2, oxyntomodulin and glicentin are secreted from enteroendocrine cells throughout the gastrointestinal tract. GLP-1 and GLP-2 are also secreted in selected neurons in the brain.

It is found in the secreted. Plays a key role in glucose metabolism and homeostasis. Regulates blood glucose by increasing gluconeogenesis and decreasing glycolysis. A counterregulatory hormone of insulin, raises plasma glucose levels in response to insulin-induced hypoglycemia. Plays an important role in initiating and maintaining hyperglycemic conditions in diabetes. Functionally, potent stimulator of glucose-dependent insulin release. Also stimulates insulin release in response to IL6. Plays important roles on gastric motility and the suppression of plasma glucagon levels. May be involved in the suppression of satiety and stimulation of glucose disposal in peripheral tissues, independent of the actions of insulin. Has growth-promoting activities on intestinal epithelium. May also regulate the hypothalamic pituitary axis (HPA) via effects on LH, TSH, CRH, oxytocin, and vasopressin secretion. Increases islet mass through stimulation of islet neogenesis and pancreatic beta cell proliferation. Inhibits beta cell apoptosis. Its function is as follows. Stimulates intestinal growth and up-regulates villus height in the small intestine, concomitant with increased crypt cell proliferation and decreased enterocyte apoptosis. The gastrointestinal tract, from the stomach to the colon is the principal target for GLP-2 action. Plays a key role in nutrient homeostasis, enhancing nutrient assimilation through enhanced gastrointestinal function, as well as increasing nutrient disposal. Stimulates intestinal glucose transport and decreases mucosal permeability. In terms of biological role, significantly reduces food intake. Inhibits gastric emptying in humans. Suppression of gastric emptying may lead to increased gastric distension, which may contribute to satiety by causing a sensation of fullness. May modulate gastric acid secretion and the gastro-pyloro-duodenal activity. May play an important role in intestinal mucosal growth in the early period of life. The protein is Pro-glucagon (GCG) of Sus scrofa (Pig).